Reading from the N-terminus, the 435-residue chain is ATP-dependent protease ATPase subunit HslU (435 aa).

ATP contacts are provided by residues Val18, 60 to 65 (GVGKTE), Asp248, Glu313, and Arg385.

It belongs to the ClpX chaperone family. HslU subfamily. As to quaternary structure, a double ring-shaped homohexamer of HslV is capped on each side by a ring-shaped HslU homohexamer. The assembly of the HslU/HslV complex is dependent on binding of ATP.

It is found in the cytoplasm. ATPase subunit of a proteasome-like degradation complex; this subunit has chaperone activity. The binding of ATP and its subsequent hydrolysis by HslU are essential for unfolding of protein substrates subsequently hydrolyzed by HslV. HslU recognizes the N-terminal part of its protein substrates and unfolds these before they are guided to HslV for hydrolysis. The polypeptide is ATP-dependent protease ATPase subunit HslU (Parvibaculum lavamentivorans (strain DS-1 / DSM 13023 / NCIMB 13966)).